A 40-amino-acid chain; its full sequence is 67 kDa serum albumin (40 aa).

One can recognise an Albumin domain in the interval 1 to 40 (DAEHKSEIVHRFNDLKEEKFKGAALITFAQFLHKKPEEEA). Histidine 4 lines the Cu cation pocket.

It belongs to the ALB/AFP/VDB family. As to expression, plasma.

It is found in the secreted. In terms of biological role, serum albumin, the main protein of plasma, has a good binding capacity for water, Ca(2+), Na(+), K(+), fatty acids, hormones, bilirubin and drugs. Its main function is the regulation of the colloidal osmotic pressure of blood. This is 67 kDa serum albumin from Trachemys scripta (Red-eared slider turtle).